Consider the following 662-residue polypeptide: DNA ligase (662 aa).

Residues 32–36 (DAEYD), 81–82 (SL), and Glu-112 each bind NAD(+). The active-site N6-AMP-lysine intermediate is Lys-114. Residues Arg-135, Glu-170, Lys-286, and Lys-310 each contribute to the NAD(+) site. The Zn(2+) site is built by Cys-402, Cys-405, Cys-420, and Cys-425. The BRCT domain occupies 583-662 (PKGGPLTGST…AELHAMLRGE (80 aa)).

The protein belongs to the NAD-dependent DNA ligase family. LigA subfamily. The cofactor is Mg(2+). Requires Mn(2+) as cofactor.

It carries out the reaction NAD(+) + (deoxyribonucleotide)n-3'-hydroxyl + 5'-phospho-(deoxyribonucleotide)m = (deoxyribonucleotide)n+m + AMP + beta-nicotinamide D-nucleotide.. Functionally, DNA ligase that catalyzes the formation of phosphodiester linkages between 5'-phosphoryl and 3'-hydroxyl groups in double-stranded DNA using NAD as a coenzyme and as the energy source for the reaction. It is essential for DNA replication and repair of damaged DNA. This Solibacter usitatus (strain Ellin6076) protein is DNA ligase.